We begin with the raw amino-acid sequence, 367 residues long: Probable protein phosphatase 2C 57 (367 aa).

A disordered region spans residues 1 to 29 (MEEHRLGGGGGGGGGGGRPPIPGAAGRKL). The span at 7–18 (GGGGGGGGGGGR) shows a compositional bias: gly residues. The region spanning 67 to 331 (RSGGWADIGS…DNLSVVVICF (265 aa)) is the PPM-type phosphatase domain. Mn(2+) contacts are provided by D111, G112, D279, and D322.

It belongs to the PP2C family. Mg(2+) serves as cofactor. It depends on Mn(2+) as a cofactor.

It catalyses the reaction O-phospho-L-seryl-[protein] + H2O = L-seryl-[protein] + phosphate. The catalysed reaction is O-phospho-L-threonyl-[protein] + H2O = L-threonyl-[protein] + phosphate. This chain is Probable protein phosphatase 2C 57, found in Oryza sativa subsp. japonica (Rice).